The chain runs to 474 residues: ABHD16B (474 aa).

The region spanning 175–293 is the AB hydrolase-1 domain; that stretch reads VICCEGNAGF…MPQSWKGLVV (119 aa). Residues Ser-248, Asp-323, and His-423 each act as charge relay system in the active site.

It belongs to the AB hydrolase superfamily. ABHD16 family.

The enzyme catalyses a 1,2-diacyl-sn-glycero-3-phospho-L-serine + H2O = a 2-acyl-sn-glycero-3-phospho-L-serine + a fatty acid + H(+). The catalysed reaction is a 1-acylglycerol + H2O = glycerol + a fatty acid + H(+). It catalyses the reaction 1-(9Z-octadecenoyl)-glycerol + H2O = glycerol + (9Z)-octadecenoate + H(+). Hydrolyzes the sn-1 position of glycerophospholipids with high specificity towards phosphatidylserine (PS), PS-PLA1 enzyme. Also hydrolyzes the acyl chain of glycerolipids with a preference for the monoacylglycerol (MAG) 1-acylglycerol, MAG lipase. Plays a regulatory role in cellular lipid homeostasis by modulating genes involved in neutral lipid degradation and in phospholipid synthesis and composition. This is ABHD16B from Rattus norvegicus (Rat).